The following is a 446-amino-acid chain: Signal recognition particle protein (446 aa).

GTP contacts are provided by residues 106–113 (GLQGSGKT), 188–192 (DTAGR), and 246–249 (SKLD).

This sequence belongs to the GTP-binding SRP family. SRP54 subfamily. In terms of assembly, part of the signal recognition particle protein translocation system, which is composed of SRP and FtsY.

Its subcellular location is the cytoplasm. The catalysed reaction is GTP + H2O = GDP + phosphate + H(+). Involved in targeting and insertion of nascent membrane proteins into the cytoplasmic membrane. Binds to the hydrophobic signal sequence of the ribosome-nascent chain (RNC) as it emerges from the ribosomes. The SRP-RNC complex is then targeted to the cytoplasmic membrane where it interacts with the SRP receptor FtsY. In Mycoplasma genitalium (strain ATCC 33530 / DSM 19775 / NCTC 10195 / G37) (Mycoplasmoides genitalium), this protein is Signal recognition particle protein.